Reading from the N-terminus, the 192-residue chain is uncharacterized protein (192 aa).

The Nudix hydrolase domain maps to 29 to 160 (HRQAAVLIPI…PLDIYRRGDS (132 aa)). Positions 67 to 89 (GAVDDTDASVIAAALREAEEEVA) match the Nudix box motif. Mg(2+)-binding residues include Glu83 and Glu87.

The protein belongs to the Nudix hydrolase family. PCD1 subfamily. Requires Mn(2+) as cofactor. It depends on Mg(2+) as a cofactor.

Functionally, probably mediates the hydrolysis of some nucleoside diphosphate derivatives. This is an uncharacterized protein from Escherichia coli (strain SE11).